The sequence spans 105 residues: Large ribosomal subunit protein uL24 (105 aa).

Belongs to the universal ribosomal protein uL24 family. In terms of assembly, part of the 50S ribosomal subunit.

In terms of biological role, one of two assembly initiator proteins, it binds directly to the 5'-end of the 23S rRNA, where it nucleates assembly of the 50S subunit. Its function is as follows. One of the proteins that surrounds the polypeptide exit tunnel on the outside of the subunit. The polypeptide is Large ribosomal subunit protein uL24 (Dictyoglomus thermophilum (strain ATCC 35947 / DSM 3960 / H-6-12)).